The primary structure comprises 268 residues: Bis(5'-nucleosyl)-tetraphosphatase, symmetrical (268 aa).

The protein belongs to the Ap4A hydrolase family.

It catalyses the reaction P(1),P(4)-bis(5'-adenosyl) tetraphosphate + H2O = 2 ADP + 2 H(+). Functionally, hydrolyzes diadenosine 5',5'''-P1,P4-tetraphosphate to yield ADP. This chain is Bis(5'-nucleosyl)-tetraphosphatase, symmetrical, found in Nitrosomonas europaea (strain ATCC 19718 / CIP 103999 / KCTC 2705 / NBRC 14298).